The primary structure comprises 338 residues: Ketol-acid reductoisomerase (NADP(+)) (338 aa).

The KARI N-terminal Rossmann domain maps to 1 to 181; sequence MRVFYDKDCD…GGGRTGIIET (181 aa). Residues 24-27, Arg47, Ser50, Thr52, and 82-85 contribute to the NADP(+) site; these read YGSQ and DEFQ. His107 is a catalytic residue. Gly133 serves as a coordination point for NADP(+). Residues 182–327 form the KARI C-terminal knotted domain; the sequence is TFKDETETDL…EKLRAMMPWI (146 aa). Residues Asp190, Glu194, Glu226, and Glu230 each contribute to the Mg(2+) site. Residue Ser251 participates in substrate binding.

The protein belongs to the ketol-acid reductoisomerase family. Mg(2+) serves as cofactor.

The enzyme catalyses (2R)-2,3-dihydroxy-3-methylbutanoate + NADP(+) = (2S)-2-acetolactate + NADPH + H(+). It catalyses the reaction (2R,3R)-2,3-dihydroxy-3-methylpentanoate + NADP(+) = (S)-2-ethyl-2-hydroxy-3-oxobutanoate + NADPH + H(+). It functions in the pathway amino-acid biosynthesis; L-isoleucine biosynthesis; L-isoleucine from 2-oxobutanoate: step 2/4. The protein operates within amino-acid biosynthesis; L-valine biosynthesis; L-valine from pyruvate: step 2/4. Its function is as follows. Involved in the biosynthesis of branched-chain amino acids (BCAA). Catalyzes an alkyl-migration followed by a ketol-acid reduction of (S)-2-acetolactate (S2AL) to yield (R)-2,3-dihydroxy-isovalerate. In the isomerase reaction, S2AL is rearranged via a Mg-dependent methyl migration to produce 3-hydroxy-3-methyl-2-ketobutyrate (HMKB). In the reductase reaction, this 2-ketoacid undergoes a metal-dependent reduction by NADPH to yield (R)-2,3-dihydroxy-isovalerate. The protein is Ketol-acid reductoisomerase (NADP(+)) of Pseudomonas paraeruginosa (strain DSM 24068 / PA7) (Pseudomonas aeruginosa (strain PA7)).